The sequence spans 612 residues: Phosphopentomutase (612 aa).

Ala-2 is subject to N-acetylalanine. Alpha-D-glucose 1,6-bisphosphate is bound by residues Arg-63 and Ser-165. Ser-165 functions as the Phosphoserine intermediate in the catalytic mechanism. Mg(2+) contacts are provided by Ser-165, Asp-322, Asp-324, and Asp-326. The residue at position 165 (Ser-165) is a Phosphoserine. Positions 326, 327, 400, 424, and 438 each coordinate alpha-D-glucose 1,6-bisphosphate.

This sequence belongs to the phosphohexose mutase family. Monomer. Mg(2+) serves as cofactor.

The protein localises to the cytoplasm. It is found in the cytosol. It catalyses the reaction alpha-D-ribose 1-phosphate = D-ribose 5-phosphate. The enzyme catalyses 2-deoxy-alpha-D-ribose 1-phosphate = 2-deoxy-D-ribose 5-phosphate. It carries out the reaction alpha-D-glucose 1-phosphate = alpha-D-glucose 6-phosphate. The catalysed reaction is O-phospho-L-seryl-[protein] + alpha-D-glucose 1-phosphate = alpha-D-glucose 1,6-bisphosphate + L-seryl-[protein]. It catalyses the reaction alpha-D-glucose 1,6-bisphosphate + L-seryl-[protein] = O-phospho-L-seryl-[protein] + alpha-D-glucose 6-phosphate. With respect to regulation, the phosphomutase activity is stimulated by glucose 1,6-bisphosphate. Catalyzes the conversion of the nucleoside breakdown products ribose-1-phosphate and deoxyribose-1-phosphate to the corresponding 5-phosphopentoses. Catalyzes the reversible isomerization of alpha-D-glucose 1-phosphate to alpha-D-glucose 6-phosphate but with a lower catalytic efficiency. The mechanism proceeds via the intermediate compound alpha-D-glucose 1,6-bisphosphate. In vitro, also has a low glucose 1,6-bisphosphate synthase activity which is most probably not physiologically relevant. This is Phosphopentomutase from Homo sapiens (Human).